Consider the following 411-residue polypeptide: MAKKKQAKQAEVNIGMVGHVDHGKTSLTKALTGVWTDRHSEELRRGISIRLGYADCEIRKCPQCGTYTTKPRCPNCLAETEFLRRVSFVDSPGHETLMATMLSGASLMDGAILVIAANEPCPQPQTKEHLMALEILGIDKIIIVQNKIDLVDEKQAEENYEQIKEFVKGTIAENAPIIPISAHHEANIDVLLKAIQDFIPTPKRDPDATPRMYVARSFDINKPGTEIKDLKGGVLGGAIIQGVFKVGDEIEIRPGIKVTEGNKTFWKPLTTKIVSLAAGNTILRKAHPGGLIGVGTTLDPYLTKSDALTGSVVGLPGTLPPIREKITIRANLLDRVVGTKEELKIEPLRTGEVLMLNIGTATTAGVITSARGDIADIKLKLPICAEIGDRVAISRRVGSRWRLIGYGTIEG.

Residues 9–203 enclose the tr-type G domain; it reads QAEVNIGMVG…AIQDFIPTPK (195 aa). The tract at residues 18–25 is G1; that stretch reads GHVDHGKT. Mg(2+)-binding residues include aspartate 21, threonine 25, glycine 46, and serine 48. Residue 21-26 coordinates GTP; that stretch reads DHGKTS. Residues 46–50 are G2; sequence GISIR. Positions 61, 64, 73, and 76 each coordinate Zn(2+). Positions 90–93 are G3; sequence DSPG. GTP-binding positions include 146–149 and 181–183; these read NKID and SAH. The tract at residues 146 to 149 is G4; sequence NKID. A G5 region spans residues 181–183; that stretch reads SAH.

It belongs to the TRAFAC class translation factor GTPase superfamily. Classic translation factor GTPase family. EIF2G subfamily. Heterotrimer composed of an alpha, a beta and a gamma chain. It depends on Mg(2+) as a cofactor.

It carries out the reaction GTP + H2O = GDP + phosphate + H(+). In terms of biological role, eIF-2 functions in the early steps of protein synthesis by forming a ternary complex with GTP and initiator tRNA. This Methanocaldococcus jannaschii (strain ATCC 43067 / DSM 2661 / JAL-1 / JCM 10045 / NBRC 100440) (Methanococcus jannaschii) protein is Translation initiation factor 2 subunit gamma.